We begin with the raw amino-acid sequence, 155 residues long: Small ribosomal subunit protein uS7 (155 aa).

It belongs to the universal ribosomal protein uS7 family. Part of the 30S ribosomal subunit. Contacts proteins S9 and S11.

In terms of biological role, one of the primary rRNA binding proteins, it binds directly to 16S rRNA where it nucleates assembly of the head domain of the 30S subunit. Is located at the subunit interface close to the decoding center, probably blocks exit of the E-site tRNA. This is Small ribosomal subunit protein uS7 from Xylella fastidiosa (strain 9a5c).